Consider the following 410-residue polypeptide: Cysteine desulfurase (410 aa).

Position 227 is an N6-(pyridoxal phosphate)lysine (K227). C365 (cysteine persulfide intermediate) is an active-site residue.

Belongs to the class-V pyridoxal-phosphate-dependent aminotransferase family. Csd subfamily. Homodimer. Interacts with SufE and the SufBCD complex composed of SufB, SufC and SufD. The interaction with SufE is required to mediate the direct transfer of the sulfur atom from the S-sulfanylcysteine. It depends on pyridoxal 5'-phosphate as a cofactor.

It localises to the cytoplasm. The catalysed reaction is (sulfur carrier)-H + L-cysteine = (sulfur carrier)-SH + L-alanine. It catalyses the reaction L-selenocysteine + AH2 = hydrogenselenide + L-alanine + A + H(+). It participates in cofactor biosynthesis; iron-sulfur cluster biosynthesis. Cysteine desulfurases mobilize the sulfur from L-cysteine to yield L-alanine, an essential step in sulfur metabolism for biosynthesis of a variety of sulfur-containing biomolecules. Component of the suf operon, which is activated and required under specific conditions such as oxidative stress and iron limitation. Acts as a potent selenocysteine lyase in vitro, that mobilizes selenium from L-selenocysteine. Selenocysteine lyase activity is however unsure in vivo. In Wigglesworthia glossinidia brevipalpis, this protein is Cysteine desulfurase.